A 396-amino-acid chain; its full sequence is Elongation factor Tu 1 (396 aa).

The tr-type G domain occupies 10 to 206 (KPHVNVGTIG…ALDTYIPTPK (197 aa)). Residues 19–26 (GHVDHGKT) are G1. Residue 19–26 (GHVDHGKT) coordinates GTP. T26 serves as a coordination point for Mg(2+). The segment at 60–64 (GITIS) is G2. The segment at 81 to 84 (DCPG) is G3. GTP is bound by residues 81 to 85 (DCPGH) and 136 to 139 (NKAD). The tract at residues 136 to 139 (NKAD) is G4. The segment at 174–176 (SAL) is G5.

This sequence belongs to the TRAFAC class translation factor GTPase superfamily. Classic translation factor GTPase family. EF-Tu/EF-1A subfamily. Monomer.

It is found in the cytoplasm. The enzyme catalyses GTP + H2O = GDP + phosphate + H(+). GTP hydrolase that promotes the GTP-dependent binding of aminoacyl-tRNA to the A-site of ribosomes during protein biosynthesis. The chain is Elongation factor Tu 1 from Ruthia magnifica subsp. Calyptogena magnifica.